Consider the following 294-residue polypeptide: Small ribosomal subunit protein uS2 (294 aa).

Belongs to the universal ribosomal protein uS2 family.

In Mycoplasma pneumoniae (strain ATCC 29342 / M129 / Subtype 1) (Mycoplasmoides pneumoniae), this protein is Small ribosomal subunit protein uS2 (rpsB).